The primary structure comprises 484 residues: HTH-type transcriptional regulator TauR (484 aa).

In terms of domain architecture, HTH gntR-type spans glycine 16 to alanine 84. The segment at residues threonine 44–alanine 63 is a DNA-binding region (H-T-H motif). Lysine 330 carries the post-translational modification N6-(pyridoxal phosphate)lysine.

In the C-terminal section; belongs to the class-I pyridoxal-phosphate-dependent aminotransferase family. Requires pyridoxal 5'-phosphate as cofactor.

In terms of biological role, transcriptional activator, which is essential for taurine-dependent expression of the tpa-tauR-xsc operon. Acts by binding to direct repeats in the promoter region. The chain is HTH-type transcriptional regulator TauR from Rhodobacter capsulatus (strain ATCC BAA-309 / NBRC 16581 / SB1003).